Consider the following 335-residue polypeptide: 2-acylglycerol O-acyltransferase 1 (335 aa).

The next 2 helical transmembrane spans lie at 18–38 (TVAVLQWVLKYLLLGPMSIGI) and 40–60 (VMLIIHNYLFLYIPYLMWLYF). 2 N-linked (GlcNAc...) asparagine glycosylation sites follow: N121 and N125. Residues 132-152 (LFPGFTSYLHVLPLWFWCPVF) traverse the membrane as a helical segment. An N-linked (GlcNAc...) asparagine glycan is attached at N180.

This sequence belongs to the diacylglycerol acyltransferase family. As to expression, expressed in stomach and liver.

It localises to the endoplasmic reticulum membrane. The catalysed reaction is a 2-acylglycerol + an acyl-CoA = a 1,2-diacylglycerol + CoA. It catalyses the reaction 2-(9Z-octadecenoyl)-glycerol + butanoyl-CoA = 1-butanoyl-2-(9Z-octadecenoyl)-glycerol + CoA. It carries out the reaction 2-(9Z-octadecenoyl)-glycerol + octanoyl-CoA = 1-octanoyl-2-(9Z-octadecenoyl)-glycerol + CoA. The enzyme catalyses 2-(9Z-octadecenoyl)-glycerol + dodecanoyl-CoA = 1-dodecanoyl-2-(9Z-octadecenoyl)-glycerol + CoA. The catalysed reaction is 2-(9Z-octadecenoyl)-glycerol + tetradecanoyl-CoA = 1-tetradecanoyl-2-(9Z-octadecenoyl)-glycerol + CoA. It catalyses the reaction 2-(9Z-octadecenoyl)-glycerol + hexadecanoyl-CoA = 1-hexadecanoyl-2-(9Z-octadecenoyl)-glycerol + CoA. It carries out the reaction 2-(9Z-octadecenoyl)-glycerol + octadecanoyl-CoA = 1-octadecanoyl-2-(9Z-octadecenoyl)-glycerol + CoA. The enzyme catalyses eicosanoyl-CoA + 2-(9Z-octadecenoyl)-glycerol = 1-eicosanoyl-2-(9Z-octadecenoyl)-glycerol + CoA. The catalysed reaction is 2-(9Z-octadecenoyl)-glycerol + (9Z)-octadecenoyl-CoA = 1,2-di-(9Z-octadecenoyl)-glycerol + CoA. It catalyses the reaction 2-(9Z-octadecenoyl)-glycerol + (9Z,12Z)-octadecadienoyl-CoA = 1-(9Z,12Z-octadecadienoyl)-2-(9Z-octadecenoyl)-glycerol + CoA. It carries out the reaction 2-(9Z-octadecenoyl)-glycerol + (5Z,8Z,11Z,14Z)-eicosatetraenoyl-CoA = 1-(5Z,8Z,11Z,14Z-eicosatetraenoyl)-2-(9Z-octadecenoyl)-glycerol + CoA. The enzyme catalyses a 2-acylglycerol + an acyl-CoA = a 1,2-diacyl-sn-glycerol + CoA. The catalysed reaction is a 2-acylglycerol + an acyl-CoA = a 2,3-diacyl-sn-glycerol + CoA. It catalyses the reaction a 1-acylglycerol + an acyl-CoA = a 1,2-diacylglycerol + CoA. It carries out the reaction 1-dodecanoylglycerol + (9Z)-octadecenoyl-CoA = 1-dodecanoyl-2-(9Z-octadecenoyl)-glycerol + CoA. The enzyme catalyses 1-tetradecanoylglycerol + (9Z)-octadecenoyl-CoA = 1-tetradecanoyl-2-(9Z-octadecenoyl)-glycerol + CoA. The catalysed reaction is 1-hexadecanoylglycerol + (9Z)-octadecenoyl-CoA = 1-hexadecanoyl-2-(9Z-octadecenoyl)-glycerol + CoA. It catalyses the reaction 1-(9Z-octadecenoyl)-glycerol + (9Z)-octadecenoyl-CoA = 1,2-di-(9Z-octadecenoyl)-glycerol + CoA. It carries out the reaction 1-(9Z,12Z-octadecadienoyl)-glycerol + (9Z)-octadecenoyl-CoA = 1-(9Z,12Z-octadecadienoyl)-2-(9Z-octadecenoyl)-glycerol + CoA. The enzyme catalyses 1-(9Z,12Z,15Z-octadecatrienoyl)-glycerol + (9Z)-octadecenoyl-CoA = 1-(9Z,12Z,15Z-octadecatrienoyl)-2-(9Z-octadecenoyl)-glycerol + CoA. The catalysed reaction is 1-(5Z,8Z,11Z,14Z-eicosatetraenoyl)-glycerol + (9Z)-octadecenoyl-CoA = 1-(5Z,8Z,11Z,14Z-eicosatetraenoyl)-2-(9Z-octadecenoyl)-glycerol + CoA. It catalyses the reaction a 1-acylglycerol + an acyl-CoA = a 1,3-diacylglycerol + CoA. It carries out the reaction 1-dodecanoylglycerol + (9Z)-octadecenoyl-CoA = 1-dodecanoyl-3-(9Z-octadecenoyl)-glycerol + CoA. The enzyme catalyses 1-hexadecanoylglycerol + (9Z)-octadecenoyl-CoA = 1-(9Z-octadecenoyl)-3-hexadecanoylglycerol + CoA. The catalysed reaction is 1-octadecanoylglycerol + (9Z)-octadecenoyl-CoA = 1-octadecanoyl-3-(9Z-octadecenoyl)-glycerol + CoA. It catalyses the reaction 1-(9Z-octadecenoyl)-sn-glycerol + (9Z)-octadecenoyl-CoA = 1,3-di-(9Z-octadecenoyl)-glycerol + CoA. It carries out the reaction 1-(9Z,12Z-octadecadienoyl)-glycerol + (9Z)-octadecenoyl-CoA = 1-(9Z-octadecenoyl)-3-(9Z,12Z-octadecadienoyl)-glycerol + CoA. The enzyme catalyses 1-(9Z,12Z,15Z-octadecatrienoyl)-glycerol + (9Z)-octadecenoyl-CoA = 1-(9Z,12Z,15Z-octadecatrienoyl)-3-(9Z-octadecenoyl)-glycerol + CoA. The catalysed reaction is a 1-acyl-sn-glycerol + an acyl-CoA = a 1,3-diacyl-sn-glycerol + CoA. It catalyses the reaction a 3-acyl-sn-glycerol + an acyl-CoA = a 1,3-diacyl-sn-glycerol + CoA. It carries out the reaction 3-octadecanoyl-sn-glycerol + (9Z)-octadecenoyl-CoA = 1-(9Z-octadecenoyl)-3-octadecanoyl-sn-glycerol + CoA. The protein operates within glycerolipid metabolism; triacylglycerol biosynthesis. Functionally, involved in glycerolipid synthesis and lipid metabolism. Catalyzes the formation of diacylglycerol, the precursor of triacylglycerol, by transferring the acyl chain of a fatty acyl-CoA to a monoacylglycerol, mainly at the sn-1 or sn-3 positions. It uses both sn-2-monoacylglycerol (2-acylglycerol) and sn-1-monoacylglycerol (1-acyl-sn-glycerol) equally well as substrates, and uses sn-3-monoacylglycerol (3-acyl-sn-glycerol) with lower efficiency. Probably not involved in absorption of dietary fat in the small intestine. This chain is 2-acylglycerol O-acyltransferase 1, found in Homo sapiens (Human).